The primary structure comprises 406 residues: Tryptophan synthase beta chain (406 aa).

An N6-(pyridoxal phosphate)lysine modification is found at Lys95.

This sequence belongs to the TrpB family. As to quaternary structure, tetramer of two alpha and two beta chains. It depends on pyridoxal 5'-phosphate as a cofactor.

The enzyme catalyses (1S,2R)-1-C-(indol-3-yl)glycerol 3-phosphate + L-serine = D-glyceraldehyde 3-phosphate + L-tryptophan + H2O. It participates in amino-acid biosynthesis; L-tryptophan biosynthesis; L-tryptophan from chorismate: step 5/5. In terms of biological role, the beta subunit is responsible for the synthesis of L-tryptophan from indole and L-serine. This chain is Tryptophan synthase beta chain, found in Azotobacter vinelandii (strain DJ / ATCC BAA-1303).